A 966-amino-acid chain; its full sequence is DNA mismatch repair protein MutS (966 aa).

Residue 709–716 (GPNMAGKS) coordinates ATP. The disordered stretch occupies residues 894–914 (EGQRPPSSPAQPPAPPAPVVV). Residues 899–912 (PSSPAQPPAPPAPV) show a composition bias toward pro residues.

This sequence belongs to the DNA mismatch repair MutS family.

Its function is as follows. This protein is involved in the repair of mismatches in DNA. It is possible that it carries out the mismatch recognition step. This protein has a weak ATPase activity. In Chloroflexus aurantiacus (strain ATCC 29366 / DSM 635 / J-10-fl), this protein is DNA mismatch repair protein MutS.